The chain runs to 561 residues: DNA ligase B (561 aa).

The N6-AMP-lysine intermediate role is filled by lysine 125.

It belongs to the NAD-dependent DNA ligase family. LigB subfamily.

It catalyses the reaction NAD(+) + (deoxyribonucleotide)n-3'-hydroxyl + 5'-phospho-(deoxyribonucleotide)m = (deoxyribonucleotide)n+m + AMP + beta-nicotinamide D-nucleotide.. Functionally, catalyzes the formation of phosphodiester linkages between 5'-phosphoryl and 3'-hydroxyl groups in double-stranded DNA using NAD as a coenzyme and as the energy source for the reaction. In Salmonella heidelberg (strain SL476), this protein is DNA ligase B.